A 456-amino-acid chain; its full sequence is Histidine--tRNA ligase (456 aa).

The protein belongs to the class-II aminoacyl-tRNA synthetase family. As to quaternary structure, homodimer.

It localises to the cytoplasm. The enzyme catalyses tRNA(His) + L-histidine + ATP = L-histidyl-tRNA(His) + AMP + diphosphate + H(+). This chain is Histidine--tRNA ligase, found in Christiangramia forsetii (strain DSM 17595 / CGMCC 1.15422 / KT0803) (Gramella forsetii).